The chain runs to 425 residues: Adenosine 3'-phospho 5'-phosphosulfate transporter 1 (425 aa).

The next 9 helical transmembrane spans lie at 27–47 (FLIL…IYYV), 102–122 (VIIL…AMGV), 147–167 (TQFL…MILA), 232–252 (YSWF…LFLL), 263–283 (ITYT…FDAF), 303–323 (MMFG…IEQG), 342–360 (VFLL…YSTI), 365–387 (PIVF…TIMY), and 391–411 (LTFL…VDIH).

The protein belongs to the nucleotide-sugar transporter family. SLC35B subfamily.

It is found in the golgi apparatus membrane. In terms of biological role, mediates the transport of adenosine 3'-phospho 5'-phosphosulfate (PAPS), from cytosol into Golgi. PAPS is a universal sulfuryl donor for sulfation events that take place in the Golgi. This Caenorhabditis elegans protein is Adenosine 3'-phospho 5'-phosphosulfate transporter 1 (pst-1).